A 331-amino-acid polypeptide reads, in one-letter code: MSAEYDLTIIGGGPVGMFAAFYAGMRNARVQLLESLPELGGQVQALYPEKIIHDVAGYPAIKGRELVAQLEKQLTQFPIDIQLASPVTDVTGAMGDFTITTASGQQSHSKAIIVATGSGAFEPRRLAVDNAAEFENKQLFYHIPSVKQFADRTVLVAGGGDSAIDMALMLEPVAKHVYIMHRRDRFRGMEHNVDLLKASSVEIKTPFLIKQLAETATGQLQLTMKEVRGTTEETLAVDDLIVNYGFIADNKVIRNWHVTPTMAHRLITVDTEMNTDVPGIAAIGDTVTYAGKLGLIASGFGEAPNAVNQLMMTLYPERRSPLHSTTVFEKM.

7 residues coordinate FAD: E34, Q42, Y47, V87, F121, D285, and T325.

This sequence belongs to the ferredoxin--NADP reductase type 2 family. As to quaternary structure, homodimer. The cofactor is FAD.

The enzyme catalyses 2 reduced [2Fe-2S]-[ferredoxin] + NADP(+) + H(+) = 2 oxidized [2Fe-2S]-[ferredoxin] + NADPH. The protein is Ferredoxin--NADP reductase of Lactiplantibacillus plantarum (strain ATCC BAA-793 / NCIMB 8826 / WCFS1) (Lactobacillus plantarum).